Here is a 467-residue protein sequence, read N- to C-terminus: MIHTQMEDAQYEIRHQVLNPNQRQQLEDRRRIKEQLHQLEQDNESPTHMYRRKLKIASDVNLLDQHDSFYHTTKSLLVLFQIMGVMPIMRSPKGVDMPRTTFTWCSKAFLWAYFIYACETVIVLVVARERINKFISTSDKRFDEVIYNIIFMSIMVPHFLLPVASWRNGSEVAKFKNMWTDFQYKYLIVTGKPIVFPKLYPITWTLCIVSWSLSLVIILSQYYLQPDFQFCHTFAYYHIIAMLNGFCSLWFVNCTAFGTASKAFAKELTDVLATERPAAKLTEYRHLWVDLSHMMQQLGKAYSNMYGIYCLVIFFTTIIATYGSLSEIIEHGATYKEVGLFVIVFYCMSLLFIICNEAHHASKRVGLNFQERLLNVNLTAVDKATQKEVEMFLVAIDKNPPTMNLDGYANINRGLITSNISFMATYLVVLMQFKLTLLRQSAKNAFISALKANLSRIRSLDADKVNT.

The Cytoplasmic portion of the chain corresponds to 1-106; that stretch reads MIHTQMEDAQ…MPRTTFTWCS (106 aa). A helical transmembrane segment spans residues 107–127; it reads KAFLWAYFIYACETVIVLVVA. The Extracellular portion of the chain corresponds to 128–144; it reads RERINKFISTSDKRFDE. A helical membrane pass occupies residues 145-165; the sequence is VIYNIIFMSIMVPHFLLPVAS. Residues 166-198 lie on the Cytoplasmic side of the membrane; the sequence is WRNGSEVAKFKNMWTDFQYKYLIVTGKPIVFPK. The helical transmembrane segment at 199-219 threads the bilayer; sequence LYPITWTLCIVSWSLSLVIIL. The Extracellular segment spans residues 220-238; the sequence is SQYYLQPDFQFCHTFAYYH. A helical transmembrane segment spans residues 239–259; that stretch reads IIAMLNGFCSLWFVNCTAFGT. Residues 260–304 lie on the Cytoplasmic side of the membrane; the sequence is ASKAFAKELTDVLATERPAAKLTEYRHLWVDLSHMMQQLGKAYSN. The chain crosses the membrane as a helical span at residues 305-325; the sequence is MYGIYCLVIFFTTIIATYGSL. The Extracellular segment spans residues 326-337; it reads SEIIEHGATYKE. A helical membrane pass occupies residues 338-358; the sequence is VGLFVIVFYCMSLLFIICNEA. The Cytoplasmic segment spans residues 359-414; sequence HHASKRVGLNFQERLLNVNLTAVDKATQKEVEMFLVAIDKNPPTMNLDGYANINRG. A helical transmembrane segment spans residues 415–435; sequence LITSNISFMATYLVVLMQFKL. Residues 436–467 lie on the Extracellular side of the membrane; the sequence is TLLRQSAKNAFISALKANLSRIRSLDADKVNT. Residue Asn-453 is glycosylated (N-linked (GlcNAc...) asparagine).

It belongs to the insect chemoreceptor superfamily. Gustatory receptor (GR) family. Gr21a subfamily. Carbon dioxide-responsive neurons coexpress GPRgr22 and GPRgr24 in the maxillary palp at both larval and adult life stages.

The protein resides in the cell membrane. Functionally, gustatory receptor which mediates acceptance or avoidance behavior, depending on its substrates. GPRgr22 and GPRgr24 together are sufficient for olfactory carbon dioxide-chemosensation. This Anopheles gambiae (African malaria mosquito) protein is Gustatory and odorant receptor 22.